Consider the following 75-residue polypeptide: Dermaseptin-SP3 (75 aa).

The N-terminal stretch at 1-22 (MAFLKKSLFLVLFLGLVSLSMC) is a signal peptide. Residues 23 to 45 (EEEKRENEVEEEQEDDEQSELRR) constitute a propeptide that is removed on maturation. Position 72 is a proline amide (P72). A propeptide spanning residues 74-75 (EQ) is cleaved from the precursor.

This sequence belongs to the frog skin active peptide (FSAP) family. Dermaseptin subfamily. In terms of tissue distribution, expressed by the skin glands.

It is found in the secreted. The protein localises to the target cell membrane. Antimicrobial peptide with activity against Gram-positive and Gram-negative bacteria and fungi. Has been tested against E.coli (MIC=47.50-128 uM), S.aureus (MIC=189.98-512 uM), K.pneumoniae (MIC&gt;189.98 uM) and C.albicans (MIC&gt;189.98 uM). Probably acts by disturbing membrane functions with its alpha-helical amphipathic structure. May penetrate bacterial membranes, but stay at the mammalian membrane surface. Shows a very weak hemolytic activity. The sequence is that of Dermaseptin-SP3 from Agalychnis spurrelli (Gliding leaf frog).